A 408-amino-acid chain; its full sequence is DNA primase DnaG (408 aa).

The Toprim domain occupies Asp-171–Glu-250. Mg(2+) contacts are provided by Glu-177, Asp-219, and Asp-221. Residues Ala-276–His-323 form a disordered region. Residues Pro-284–Ala-298 show a composition bias toward low complexity. A compositionally biased stretch (basic and acidic residues) spans Ser-302–Ser-314.

Belongs to the archaeal DnaG primase family. In terms of assembly, forms a ternary complex with MCM helicase and DNA. It depends on Mg(2+) as a cofactor.

It carries out the reaction ssDNA + n NTP = ssDNA/pppN(pN)n-1 hybrid + (n-1) diphosphate.. Functionally, RNA polymerase that catalyzes the synthesis of short RNA molecules used as primers for DNA polymerase during DNA replication. In Methanoculleus marisnigri (strain ATCC 35101 / DSM 1498 / JR1), this protein is DNA primase DnaG.